We begin with the raw amino-acid sequence, 86 residues long: Small ribosomal subunit protein uS17 (86 aa).

Belongs to the universal ribosomal protein uS17 family. Part of the 30S ribosomal subunit.

One of the primary rRNA binding proteins, it binds specifically to the 5'-end of 16S ribosomal RNA. This is Small ribosomal subunit protein uS17 from Tropheryma whipplei (strain TW08/27) (Whipple's bacillus).